We begin with the raw amino-acid sequence, 646 residues long: MRAPGAGAASVVSLALLWLLGLPWTWSAAAALGVYVGSGGWRFLRIVCKTARRDLFGLSVLIRVRLELRRHQRAGHTIPRIFQAVVQRQPERLALVDAGTGECWTFAQLDAYSNAVANLFRQLGFAPGDVVAIFLEGRPEFVGLWLGLAKAGMEAALLNVNLRREPLAFCLGTSGAKALIFGGEMVAAVAEVSGHLGKSLIKFCSGDLGPEGILPDTHLLDPLLKEASTAPLAQIPSKGMDDRLFYIYTSGTTGLPKAAIVVHSRYYRMAAFGHHAYRMQAADVLYDCLPLYHSAGNIIGVGQCLIYGLTVVLRKKFSASRFWDDCIKYNCTVVQYIGEICRYLLKQPVREAERRHRVRLAVGNGLRPAIWEEFTERFGVRQIGEFYGATECNCSIANMDGKVGSCGFNSRILPHVYPIRLVKVNEDTMELLRDAQGLCIPCQAGEPGLLVGQINQQDPLRRFDGYVSESATSKKIAHSVFSKGDSAYLSGDVLVMDELGYMYFRDRSGDTFRWRGENVSTTEVEGVLSRLLGQTDVAVYGVAVPGVEGKAGMAAVADPHSLLDPNAIYQELQKVLAPYARPIFLRLLPQVDTTGTFKIQKTRLQREGFDPRQTSDRLFFLDLKQGHYLPLNEAVYTRICSGAFAL.

Residues 1-13 (MRAPGAGAASVVS) lie on the Extracellular side of the membrane. A helical transmembrane segment spans residues 14 to 34 (LALLWLLGLPWTWSAAAALGV). The Cytoplasmic segment spans residues 35 to 646 (YVGSGGWRFL…TRICSGAFAL (612 aa)). Positions 191–475 (EVSGHLGKSL…YVSESATSKK (285 aa)) are sufficient for oligomerization. Position 246–257 (246–257 (YIYTSGTTGLPK)) interacts with AMP.

This sequence belongs to the ATP-dependent AMP-binding enzyme family. In terms of assembly, self-associates. May function as a homodimer. Interacts with EPRS1; mediates the translocation of SLC27A1 from the cytoplasm to the plasma membrane thereby increasing the uptake of long-chain fatty acids. Interacts with DGAT2 and this interaction is enhanced in the presence of ZFYVE1. Highest levels of expression are detected in muscle and adipose tissue small, intermediate levels in small intestine, and barely detectable in liver. Expressed in brain gray matter.

It is found in the cell membrane. The protein resides in the endomembrane system. The protein localises to the cytoplasm. It catalyses the reaction a fatty acid(in) = a fatty acid(out). The enzyme catalyses (9Z)-octadecenoate(out) = (9Z)-octadecenoate(in). It carries out the reaction hexadecanoate(out) = hexadecanoate(in). The catalysed reaction is (9Z,12Z)-octadecadienoate(out) = (9Z,12Z)-octadecadienoate(in). It catalyses the reaction (5Z,8Z,11Z,14Z)-eicosatetraenoate(out) = (5Z,8Z,11Z,14Z)-eicosatetraenoate(in). The enzyme catalyses a long-chain fatty acid + ATP + CoA = a long-chain fatty acyl-CoA + AMP + diphosphate. It carries out the reaction (5Z,8Z,11Z,14Z)-eicosatetraenoate + ATP + CoA = (5Z,8Z,11Z,14Z)-eicosatetraenoyl-CoA + AMP + diphosphate. The catalysed reaction is a very long-chain fatty acid + ATP + CoA = a very long-chain fatty acyl-CoA + AMP + diphosphate. It catalyses the reaction tetracosanoate + ATP + CoA = tetracosanoyl-CoA + AMP + diphosphate. Its activity is regulated as follows. Inhibited by Triacsin C. Functionally, mediates the import of long-chain fatty acids (LCFA) into the cell by facilitating their transport at the plasma membrane. Also functions as an acyl-CoA ligase catalyzing the ATP-dependent formation of fatty acyl-CoA using LCFA and very-long-chain fatty acids (VLCFA) as substrates, which prevents fatty acid efflux from cells and might drive more fatty acid uptake. May act directly as a bona fide transporter, or alternatively, in a cytoplasmic or membrane-associated multimeric protein complex to trap and draw fatty acids towards accumulation. Plays a pivotal role in regulating available LCFA substrates from exogenous sources in tissues undergoing high levels of beta-oxidation or triglyceride synthesis. May be involved in regulation of cholesterol metabolism. Probably involved in fatty acid transport across the blood barrier. The polypeptide is Long-chain fatty acid transport protein 1 (Homo sapiens (Human)).